The sequence spans 164 residues: MSARPEGSPPEVTLETSMGPFTVEMYYKHSPRTCRNFLELSRRGYYDNVLFHRIVKDFIVQGGDPTGTGRGGESIYGSKFEDEINKELKHTGAGILSMANAGPNTNGSQFFITLAPQPSLDGKHTIFGRVCRGMEVIKRLGSVQTDNTDRPIHEVKILRTKVID.

In terms of domain architecture, PPIase cyclophilin-type spans 12-162; the sequence is VTLETSMGPF…HEVKILRTKV (151 aa).

It belongs to the cyclophilin-type PPIase family. In terms of tissue distribution, ubiquitous.

The protein localises to the cytoplasm. The enzyme catalyses [protein]-peptidylproline (omega=180) = [protein]-peptidylproline (omega=0). Its function is as follows. PPIases accelerate the folding of proteins. It catalyzes the cis-trans isomerization of proline imidic peptide bonds in oligopeptides. The polypeptide is Peptidyl-prolyl cis-trans isomerase CYP18-2 (CYP18-2) (Arabidopsis thaliana (Mouse-ear cress)).